A 186-amino-acid polypeptide reads, in one-letter code: Single-stranded DNA-binding protein 1 (186 aa).

One can recognise an SSB domain in the interval 1-108 (MDATVTVVGN…LEIDEIGPTL (108 aa)). Positions 119 to 186 (TQAGHGVSPD…EDFDSDEVPF (68 aa)) are disordered. Residues 175 to 186 (SYEDFDSDEVPF) show a composition bias toward acidic residues.

As to quaternary structure, homotetramer.

This Tropheryma whipplei (strain Twist) (Whipple's bacillus) protein is Single-stranded DNA-binding protein 1 (ssb1).